A 269-amino-acid chain; its full sequence is Protein OPG079 (269 aa).

This sequence belongs to the orthopoxvirus OPG079 family. In terms of assembly, homoomultimer (Potential). Interacts with the small subunit of ribonucleotide reductase. Interacts with host FAM111A; this interaction protomtes OPG079 degradation through autophagy.

The protein resides in the host cytoplasm. Its function is as follows. Plays an essential role in viral DNA replication. Binds to ssDNA with high affinity and localizes to cytoplasmic factories where nascent viral genomes accumulate. May disrupt loops, hairpins and other secondary structures present on ssDNA to reduce and eliminate pausing of viral DNA polymerase at specific sites during elongation. In Variola virus (isolate Human/India/Ind3/1967) (VARV), this protein is Protein OPG079 (OPG079).